The sequence spans 127 residues: uncharacterized protein (127 aa).

4 helical membrane-spanning segments follow: residues 1 to 21 (MYIIMGVFTTIVNIASFYILV), 32 to 52 (TVAAWILSVLFAYITNKLYVF), 68 to 88 (AFFSVRVLSLGIDLGMMIILV), and 100 to 120 (ILDNAVIVVVNYVASKWLVFK).

This sequence belongs to the GtrA family.

It is found in the cell membrane. This is an uncharacterized protein from Bacillus subtilis (strain 168).